Reading from the N-terminus, the 606-residue chain is UPF0329 protein ECU06_0090 (606 aa).

The interval 317–401 is disordered; the sequence is KKEEERREEE…SREACSKERN (85 aa). Residues 328-353 show a composition bias toward basic and acidic residues; that stretch reads EKKRKEEVVQRNVEELLRGEEEEKKG. The span at 354–367 shows a compositional bias: basic residues; it reads AKAKRKSKKKKKGS. The span at 381–401 shows a compositional bias: basic and acidic residues; that stretch reads SENREAQEMEDSREACSKERN.

Belongs to the UPF0329 family.

In Encephalitozoon cuniculi (strain GB-M1) (Microsporidian parasite), this protein is UPF0329 protein ECU06_0090.